The following is a 260-amino-acid chain: DNA repair protein RecO (260 aa).

This sequence belongs to the RecO family.

In terms of biological role, involved in DNA repair and RecF pathway recombination. In Levilactobacillus brevis (strain ATCC 367 / BCRC 12310 / CIP 105137 / JCM 1170 / LMG 11437 / NCIMB 947 / NCTC 947) (Lactobacillus brevis), this protein is DNA repair protein RecO.